The sequence spans 113 residues: Hydrogenase maturation factor HybF (113 aa).

Positions 2 and 3 each coordinate Ni(2+). Zn(2+) contacts are provided by Cys-73, Cys-76, Cys-89, and Cys-92.

The protein belongs to the HypA/HybF family. HybF subfamily.

Involved in the maturation of [NiFe] hydrogenases. Required for nickel insertion into the metal center of the hydrogenase. The sequence is that of Hydrogenase maturation factor HybF from Morganella morganii (Proteus morganii).